The following is a 360-amino-acid chain: Phospho-N-acetylmuramoyl-pentapeptide-transferase (360 aa).

Helical transmembrane passes span 26 to 46 (AILA…KLIE), 74 to 94 (MGGL…GDLG), 97 to 117 (YVWV…IDDY), 132 to 152 (WKYI…FYST), 168 to 188 (ILPQ…VGAS), 199 to 219 (GLAI…AYLS), 236 to 256 (SGEL…FLWF), 263 to 283 (VFMG…IAVL), 288 to 308 (ILLV…ILQV), and 338 to 358 (VIVR…ATLK).

The protein belongs to the glycosyltransferase 4 family. MraY subfamily. Mg(2+) is required as a cofactor.

It localises to the cell inner membrane. The enzyme catalyses UDP-N-acetyl-alpha-D-muramoyl-L-alanyl-gamma-D-glutamyl-meso-2,6-diaminopimeloyl-D-alanyl-D-alanine + di-trans,octa-cis-undecaprenyl phosphate = di-trans,octa-cis-undecaprenyl diphospho-N-acetyl-alpha-D-muramoyl-L-alanyl-D-glutamyl-meso-2,6-diaminopimeloyl-D-alanyl-D-alanine + UMP. It participates in cell wall biogenesis; peptidoglycan biosynthesis. Its function is as follows. Catalyzes the initial step of the lipid cycle reactions in the biosynthesis of the cell wall peptidoglycan: transfers peptidoglycan precursor phospho-MurNAc-pentapeptide from UDP-MurNAc-pentapeptide onto the lipid carrier undecaprenyl phosphate, yielding undecaprenyl-pyrophosphoryl-MurNAc-pentapeptide, known as lipid I. The protein is Phospho-N-acetylmuramoyl-pentapeptide-transferase of Shewanella amazonensis (strain ATCC BAA-1098 / SB2B).